The following is a 437-amino-acid chain: tRNA(Ile)-lysidine synthase (437 aa).

ATP is bound at residue S22–S27.

It belongs to the tRNA(Ile)-lysidine synthase family.

The protein resides in the cytoplasm. The catalysed reaction is cytidine(34) in tRNA(Ile2) + L-lysine + ATP = lysidine(34) in tRNA(Ile2) + AMP + diphosphate + H(+). Functionally, ligates lysine onto the cytidine present at position 34 of the AUA codon-specific tRNA(Ile) that contains the anticodon CAU, in an ATP-dependent manner. Cytidine is converted to lysidine, thus changing the amino acid specificity of the tRNA from methionine to isoleucine. In Xylella fastidiosa (strain Temecula1 / ATCC 700964), this protein is tRNA(Ile)-lysidine synthase.